The chain runs to 277 residues: Putative gamma-glutamylcyclotransferase YkqA (277 aa).

8 to 11 contacts substrate; that stretch reads YGTL. The active-site Proton acceptor is the Glu-205.

This sequence belongs to the gamma-glutamylcyclotransferase family.

Its function is as follows. Putative gamma-glutamylcyclotransferase. The sequence is that of Putative gamma-glutamylcyclotransferase YkqA (ykqA) from Bacillus subtilis (strain 168).